Reading from the N-terminus, the 1358-residue chain is DNA mismatch repair protein Msh6 (1358 aa).

The disordered stretch occupies residues 1-87 (MSRQSTLYSF…SSAQAVPPSS (87 aa)). Phosphoserine is present on residues S14, S38, and S40. The segment covering 25 to 46 (AEASRQGAAASGASASRGGDAA) has biased composition (low complexity). N6-acetyllysine is present on K67. The segment covering 76 to 87 (ASSSAQAVPPSS) has biased composition (low complexity). A phosphoserine mark is found at S91, S137, S200, S219, and S227. One can recognise a PWWP domain in the interval 92-154 (PGDLVWAKME…KRMLKPYTGS (63 aa)). Residues 197–360 (DEPSEPEEEE…VSGGGNDSSG (164 aa)) form a disordered region. Acidic residues-rich tracts occupy residues 198-209 (EPSEPEEEEETE) and 219-231 (SEED…EEEA). Residues 240–249 (RSSRQVKKRR) show a composition bias toward basic residues. Phosphoserine is present on residues S252, S254, S256, and S261. Basic and acidic residues predominate over residues 263–273 (VEFKPDTKQEG). At T269 the chain carries Phosphothreonine. A phosphoserine mark is found at S274, S275, S279, and S280. Polar residues predominate over residues 329–351 (LSETKSTLSAFSAPQNSESQTHV). T487 carries the phosphothreonine modification. K503 carries the post-translational modification N6-acetyllysine. Phosphoserine is present on residues S827 and S932. Position 1007 is a phosphothreonine (T1007). 1132-1139 (GPNMGGKS) lines the ATP pocket.

Belongs to the DNA mismatch repair MutS family. Component of the DNA mismatch repair (MMR) complex composed at least of MSH2, MSH3, MSH6, PMS1 and MLH1. Heterodimer consisting of MSH2-MSH6 (MutS alpha). Forms a ternary complex with MutL alpha (MLH1-PMS1). Interacts with MCM9. Part of the BRCA1-associated genome surveillance complex (BASC), which contains BRCA1, MSH2, MSH6, MLH1, ATM, BLM, PMS2 and the RAD50-MRE11-NBS1 protein complex. This association could be a dynamic process changing throughout the cell cycle and within subnuclear domains. Post-translationally, phosphorylated by PRKCZ, which may prevent MutS alpha degradation by the ubiquitin-proteasome pathway.

It is found in the nucleus. The protein localises to the chromosome. Component of the post-replicative DNA mismatch repair system (MMR). Heterodimerizes with MSH2 to form MutS alpha, which binds to DNA mismatches thereby initiating DNA repair. When bound, MutS alpha bends the DNA helix and shields approximately 20 base pairs, and recognizes single base mismatches and dinucleotide insertion-deletion loops (IDL) in the DNA. After mismatch binding, forms a ternary complex with the MutL alpha heterodimer, which is thought to be responsible for directing the downstream MMR events, including strand discrimination, excision, and resynthesis. ATP binding and hydrolysis play a pivotal role in mismatch repair functions. The ATPase activity associated with MutS alpha regulates binding similar to a molecular switch: mismatched DNA provokes ADP--&gt;ATP exchange, resulting in a discernible conformational transition that converts MutS alpha into a sliding clamp capable of hydrolysis-independent diffusion along the DNA backbone. This transition is crucial for mismatch repair. MutS alpha may also play a role in DNA homologous recombination repair. Recruited on chromatin in G1 and early S phase via its PWWP domain that specifically binds trimethylated 'Lys-36' of histone H3 (H3K36me3): early recruitment to chromatin to be replicated allowing a quick identification of mismatch repair to initiate the DNA mismatch repair reaction. The chain is DNA mismatch repair protein Msh6 from Mus musculus (Mouse).